The chain runs to 613 residues: Dihydroxy-acid dehydratase (613 aa).

Residue D81 participates in Mg(2+) binding. C122 contributes to the [2Fe-2S] cluster binding site. 2 residues coordinate Mg(2+): D123 and K124. Residue K124 is modified to N6-carboxylysine. Residue C195 participates in [2Fe-2S] cluster binding. Position 491 (E491) interacts with Mg(2+). The Proton acceptor role is filled by S517.

It belongs to the IlvD/Edd family. Homodimer. [2Fe-2S] cluster is required as a cofactor. It depends on Mg(2+) as a cofactor.

The enzyme catalyses (2R)-2,3-dihydroxy-3-methylbutanoate = 3-methyl-2-oxobutanoate + H2O. It catalyses the reaction (2R,3R)-2,3-dihydroxy-3-methylpentanoate = (S)-3-methyl-2-oxopentanoate + H2O. It participates in amino-acid biosynthesis; L-isoleucine biosynthesis; L-isoleucine from 2-oxobutanoate: step 3/4. The protein operates within amino-acid biosynthesis; L-valine biosynthesis; L-valine from pyruvate: step 3/4. Functions in the biosynthesis of branched-chain amino acids. Catalyzes the dehydration of (2R,3R)-2,3-dihydroxy-3-methylpentanoate (2,3-dihydroxy-3-methylvalerate) into 2-oxo-3-methylpentanoate (2-oxo-3-methylvalerate) and of (2R)-2,3-dihydroxy-3-methylbutanoate (2,3-dihydroxyisovalerate) into 2-oxo-3-methylbutanoate (2-oxoisovalerate), the penultimate precursor to L-isoleucine and L-valine, respectively. The sequence is that of Dihydroxy-acid dehydratase from Nitrobacter hamburgensis (strain DSM 10229 / NCIMB 13809 / X14).